The following is a 352-amino-acid chain: Putative [LysW]-L-2-aminoadipate/[LysW]-L-glutamate phosphate reductase (352 aa).

NADP(+) is bound by residues 10-13 and 34-36; these read SGFT and SRR. The active site involves C151. N319 contacts NADP(+).

The protein belongs to the NAGSA dehydrogenase family. Type 1 subfamily. LysY sub-subfamily.

The protein resides in the cytoplasm. The enzyme catalyses [amino-group carrier protein]-C-terminal-N-(1-carboxy-5-oxopentan-1-yl)-L-glutamine + phosphate + NADP(+) = [amino-group carrier protein]-C-terminal-N-(1-carboxy-5-phosphooxy-5-oxopentan-1-yl)-L-glutamine + NADPH + H(+). It catalyses the reaction [amino-group carrier protein]-C-terminal-gamma-(L-glutamyl-5-semialdehyde)-L-glutamate + phosphate + NADP(+) = [amino-group carrier protein]-C-terminal-gamma-(5-phospho-L-glutamyl)-L-glutamate + NADPH + H(+). It functions in the pathway amino-acid biosynthesis; L-lysine biosynthesis via AAA pathway; L-lysine from L-alpha-aminoadipate (Thermus route): step 3/5. It participates in amino-acid biosynthesis; L-arginine biosynthesis. In terms of biological role, involved in both the arginine and lysine biosynthetic pathways. This is Putative [LysW]-L-2-aminoadipate/[LysW]-L-glutamate phosphate reductase from Pyrobaculum islandicum (strain DSM 4184 / JCM 9189 / GEO3).